Here is a 65-residue protein sequence, read N- to C-terminus: Cell death protein rpr (65 aa).

As to quaternary structure, interacts with Diap2 (via BIR2 domain).

Its function is as follows. Activator of apoptosis, as well as grim and hid, that acts on the effector Dredd. In Drosophila melanogaster (Fruit fly), this protein is Cell death protein rpr (rpr).